The sequence spans 406 residues: FBD-associated F-box protein At1g60410 (406 aa).

In terms of domain architecture, F-box spans 9–59 (KDRLSDLPCHLLCRILSNLSTKESVRTSVLSPRWSNLWSLVSVLDLDFQDF). One can recognise an FBD domain in the interval 355–405 (MEEIKLSPVPQCVLSSLDFLQLKAPSTPSKMKLATYFRKKCTRLTKMLLSG).

In Arabidopsis thaliana (Mouse-ear cress), this protein is FBD-associated F-box protein At1g60410.